We begin with the raw amino-acid sequence, 272 residues long: Orotidine 5'-phosphate decarboxylase (272 aa).

Residue K95 is the Proton donor of the active site.

This sequence belongs to the OMP decarboxylase family. Type 2 subfamily.

It carries out the reaction orotidine 5'-phosphate + H(+) = UMP + CO2. It participates in pyrimidine metabolism; UMP biosynthesis via de novo pathway; UMP from orotate: step 2/2. The sequence is that of Orotidine 5'-phosphate decarboxylase from Bordetella petrii (strain ATCC BAA-461 / DSM 12804 / CCUG 43448).